Consider the following 225-residue polypeptide: UPF0758 protein XOO0462 (225 aa).

The MPN domain occupies 102–224; sequence ALSDPPSVGR…PVSLAERGWL (123 aa). Zn(2+) is bound by residues histidine 173, histidine 175, and aspartate 186. The JAMM motif motif lies at 173–186; sequence HNHPSGNPEPSEAD.

Belongs to the UPF0758 family.

In Xanthomonas oryzae pv. oryzae (strain MAFF 311018), this protein is UPF0758 protein XOO0462.